A 447-amino-acid chain; its full sequence is Tubulin beta chain (447 aa).

GTP contacts are provided by Gln11, Glu69, Ser138, Gly142, Thr143, Gly144, Asn204, and Asn226. Glu69 lines the Mg(2+) pocket. Residues 424-447 (QYQEASVSEGEEEYDEEAPLEAEE) form a disordered region. A compositionally biased stretch (acidic residues) spans 432–447 (EGEEEYDEEAPLEAEE).

This sequence belongs to the tubulin family. In terms of assembly, dimer of alpha and beta chains. A typical microtubule is a hollow water-filled tube with an outer diameter of 25 nm and an inner diameter of 15 nM. Alpha-beta heterodimers associate head-to-tail to form protofilaments running lengthwise along the microtubule wall with the beta-tubulin subunit facing the microtubule plus end conferring a structural polarity. Microtubules usually have 13 protofilaments but different protofilament numbers can be found in some organisms and specialized cells. Requires Mg(2+) as cofactor.

The protein localises to the cytoplasm. It localises to the cytoskeleton. Tubulin is the major constituent of microtubules, a cylinder consisting of laterally associated linear protofilaments composed of alpha- and beta-tubulin heterodimers. Microtubules grow by the addition of GTP-tubulin dimers to the microtubule end, where a stabilizing cap forms. Below the cap, tubulin dimers are in GDP-bound state, owing to GTPase activity of alpha-tubulin. In Cochliobolus heterostrophus (Southern corn leaf blight fungus), this protein is Tubulin beta chain (TUB1).